Here is a 338-residue protein sequence, read N- to C-terminus: Glycerol-3-phosphate dehydrogenase [NAD(P)+] (338 aa).

The NADPH site is built by Ser-15, Tyr-16, His-36, and Lys-110. The sn-glycerol 3-phosphate site is built by Lys-110, Gly-139, and Thr-141. Residue Ala-143 participates in NADPH binding. The sn-glycerol 3-phosphate site is built by Lys-195, Asp-248, Ser-258, Arg-259, and Asn-260. Lys-195 (proton acceptor) is an active-site residue. Residue Arg-259 coordinates NADPH. Residues Val-283 and Glu-285 each contribute to the NADPH site.

The protein belongs to the NAD-dependent glycerol-3-phosphate dehydrogenase family.

It localises to the cytoplasm. The catalysed reaction is sn-glycerol 3-phosphate + NAD(+) = dihydroxyacetone phosphate + NADH + H(+). It carries out the reaction sn-glycerol 3-phosphate + NADP(+) = dihydroxyacetone phosphate + NADPH + H(+). Its pathway is membrane lipid metabolism; glycerophospholipid metabolism. In terms of biological role, catalyzes the reduction of the glycolytic intermediate dihydroxyacetone phosphate (DHAP) to sn-glycerol 3-phosphate (G3P), the key precursor for phospholipid synthesis. This Edwardsiella ictaluri (strain 93-146) protein is Glycerol-3-phosphate dehydrogenase [NAD(P)+].